Reading from the N-terminus, the 213-residue chain is Putative 3-methyladenine DNA glycosylase (213 aa).

It belongs to the DNA glycosylase MPG family.

The protein is Putative 3-methyladenine DNA glycosylase of Paraburkholderia phytofirmans (strain DSM 17436 / LMG 22146 / PsJN) (Burkholderia phytofirmans).